The primary structure comprises 199 residues: Imidazole glycerol phosphate synthase subunit HisH 2 (199 aa).

The Glutamine amidotransferase type-1 domain maps to 1–199 (MIAVIDVSGN…NNFLSLESTC (199 aa)). C76 (nucleophile) is an active-site residue. Catalysis depends on residues H177 and E179.

Heterodimer of HisH and HisF.

Its subcellular location is the cytoplasm. It carries out the reaction 5-[(5-phospho-1-deoxy-D-ribulos-1-ylimino)methylamino]-1-(5-phospho-beta-D-ribosyl)imidazole-4-carboxamide + L-glutamine = D-erythro-1-(imidazol-4-yl)glycerol 3-phosphate + 5-amino-1-(5-phospho-beta-D-ribosyl)imidazole-4-carboxamide + L-glutamate + H(+). It catalyses the reaction L-glutamine + H2O = L-glutamate + NH4(+). It participates in amino-acid biosynthesis; L-histidine biosynthesis; L-histidine from 5-phospho-alpha-D-ribose 1-diphosphate: step 5/9. In terms of biological role, IGPS catalyzes the conversion of PRFAR and glutamine to IGP, AICAR and glutamate. The HisH subunit provides the glutamine amidotransferase activity that produces the ammonia necessary to HisF for the synthesis of IGP and AICAR. The chain is Imidazole glycerol phosphate synthase subunit HisH 2 from Legionella pneumophila (strain Paris).